The sequence spans 240 residues: Octanoyltransferase (240 aa).

Positions 31-216 (GQVGDTLLLL…HLCAVFDLEP (186 aa)) constitute a BPL/LPL catalytic domain. Substrate is bound by residues 76–83 (RGGGATYH), 145–147 (AIG), and 159–161 (GLA). Cys177 acts as the Acyl-thioester intermediate in catalysis.

Belongs to the LipB family.

Its subcellular location is the cytoplasm. The catalysed reaction is octanoyl-[ACP] + L-lysyl-[protein] = N(6)-octanoyl-L-lysyl-[protein] + holo-[ACP] + H(+). It functions in the pathway protein modification; protein lipoylation via endogenous pathway; protein N(6)-(lipoyl)lysine from octanoyl-[acyl-carrier-protein]: step 1/2. In terms of biological role, catalyzes the transfer of endogenously produced octanoic acid from octanoyl-acyl-carrier-protein onto the lipoyl domains of lipoate-dependent enzymes. Lipoyl-ACP can also act as a substrate although octanoyl-ACP is likely to be the physiological substrate. This chain is Octanoyltransferase, found in Roseiflexus sp. (strain RS-1).